Reading from the N-terminus, the 308-residue chain is MKSFFLYLYVAFMFSCITALPLPVDNKRASSDSLDLKKKYAPDPPITHNVNIGIVFTDPESSEEAGRLITIDLYGTMVPKTVMTFCQYVDSVKDRLASRHSYSPERDFDKILPNGAIEGSSVSSSSIEETEMLAPKLPEENHSLIHDRPGRVSMIKDDKGLKFIIETSETPLEGESVVFGQVTAGLKDLMDKLANVKTDENGKPEQPITIGYISSQEHRIQHAKEAHEKYLQRLQDYQNGDLEKGITLKNYLYQGSQRKLEDAKYNQLHHPLPKIMLGISVLLLFYVLAKYRKRIFNRSSKIVSIRED.

Residues 56–215 (FTDPESSEEA…QPITIGYISS (160 aa)) form the PPIase cyclophilin-type domain.

The catalysed reaction is [protein]-peptidylproline (omega=180) = [protein]-peptidylproline (omega=0). In terms of biological role, PPIases accelerate the folding of proteins. It catalyzes the cis-trans isomerization of proline imidic peptide bonds in oligopeptides. This chain is Peptidyl-prolyl cis-trans isomerase CYP8 (CPR8), found in Saccharomyces cerevisiae (strain ATCC 204508 / S288c) (Baker's yeast).